The primary structure comprises 240 residues: Uridylate kinase (240 aa).

Residue 12 to 15 coordinates ATP; that stretch reads KLSG. The involved in allosteric activation by GTP stretch occupies residues 20–25; it reads GEQGNG. Position 54 (Gly54) interacts with UMP. 2 residues coordinate ATP: Gly55 and Arg59. UMP-binding positions include Asp74 and 135–142; that span reads TGNPYFST. ATP-binding residues include Asn163, Tyr169, and Asp172.

This sequence belongs to the UMP kinase family. As to quaternary structure, homohexamer.

It localises to the cytoplasm. It catalyses the reaction UMP + ATP = UDP + ADP. The protein operates within pyrimidine metabolism; CTP biosynthesis via de novo pathway; UDP from UMP (UMPK route): step 1/1. With respect to regulation, allosterically activated by GTP. Inhibited by UTP. Catalyzes the reversible phosphorylation of UMP to UDP. The chain is Uridylate kinase from Bacillus velezensis (strain DSM 23117 / BGSC 10A6 / LMG 26770 / FZB42) (Bacillus amyloliquefaciens subsp. plantarum).